The sequence spans 967 residues: RNA polymerase-associated protein RapA (967 aa).

Residues Glu-163–Asn-333 enclose the Helicase ATP-binding domain. Residue Asp-176–Thr-183 coordinates ATP. Positions Asp-279–His-282 match the DEAH box motif. The 172-residue stretch at Arg-489–Gly-660 folds into the Helicase C-terminal domain.

Belongs to the SNF2/RAD54 helicase family. RapA subfamily. As to quaternary structure, interacts with the RNAP. Has a higher affinity for the core RNAP than for the holoenzyme. Its ATPase activity is stimulated by binding to RNAP.

In terms of biological role, transcription regulator that activates transcription by stimulating RNA polymerase (RNAP) recycling in case of stress conditions such as supercoiled DNA or high salt concentrations. Probably acts by releasing the RNAP, when it is trapped or immobilized on tightly supercoiled DNA. Does not activate transcription on linear DNA. Probably not involved in DNA repair. The protein is RNA polymerase-associated protein RapA of Proteus mirabilis (strain HI4320).